A 369-amino-acid polypeptide reads, in one-letter code: Guanine nucleotide-binding protein subunit beta-2 (369 aa).

The segment covering 1–24 has biased composition (polar residues); that stretch reads MSTIAGESSSSSKMPENSQPTTTE. The disordered stretch occupies residues 1–28; the sequence is MSTIAGESSSSSKMPENSQPTTTEKGSE. 7 WD repeats span residues 79-109, 121-151, 167-197, 209-241, 253-283, 297-327, and 339-369; these read GHVG…IVWD, MPTT…SVVP, THTS…AIWD, GHTG…LVWD, GHEA…RLFD, SILF…GVWD, and GHEN…RIWA.

Belongs to the WD repeat G protein beta family. In terms of assembly, g proteins are composed of 3 units, alpha, beta and gamma. Interacts with G protein gamma subunits gpc-1 and gpc-2 and with egl-10 and eat-16.

In terms of biological role, guanine nucleotide-binding proteins (G proteins) are involved as a modulator or transducer in various transmembrane signaling systems. The beta and gamma chains are required for the GTPase activity, for replacement of GDP by GTP, and for G protein-effector interaction. Plays a role in regulating dopamine-mediated locomotion behavior. The chain is Guanine nucleotide-binding protein subunit beta-2 from Caenorhabditis elegans.